Consider the following 194-residue polypeptide: dTTP/UTP pyrophosphatase (194 aa).

The Proton acceptor role is filled by Asp-69.

Belongs to the Maf family. YhdE subfamily. A divalent metal cation serves as cofactor.

It localises to the cytoplasm. The catalysed reaction is dTTP + H2O = dTMP + diphosphate + H(+). The enzyme catalyses UTP + H2O = UMP + diphosphate + H(+). In terms of biological role, nucleoside triphosphate pyrophosphatase that hydrolyzes dTTP and UTP. May have a dual role in cell division arrest and in preventing the incorporation of modified nucleotides into cellular nucleic acids. This is dTTP/UTP pyrophosphatase from Moorella thermoacetica (strain ATCC 39073 / JCM 9320).